Reading from the N-terminus, the 39-residue chain is Photosystem II reaction center protein L (39 aa).

Residues 18-38 (SLYLGVLSVLVLGILFSSYFF) form a helical membrane-spanning segment.

It belongs to the PsbL family. As to quaternary structure, PSII is composed of 1 copy each of membrane proteins PsbA, PsbB, PsbC, PsbD, PsbE, PsbF, PsbH, PsbI, PsbJ, PsbK, PsbL, PsbM, PsbT, PsbX, PsbY, Psb30/Ycf12, peripheral proteins PsbO, CyanoQ (PsbQ), PsbU, PsbV and a large number of cofactors. It forms dimeric complexes.

Its subcellular location is the cellular thylakoid membrane. In terms of biological role, one of the components of the core complex of photosystem II (PSII). PSII is a light-driven water:plastoquinone oxidoreductase that uses light energy to abstract electrons from H(2)O, generating O(2) and a proton gradient subsequently used for ATP formation. It consists of a core antenna complex that captures photons, and an electron transfer chain that converts photonic excitation into a charge separation. This subunit is found at the monomer-monomer interface and is required for correct PSII assembly and/or dimerization. The chain is Photosystem II reaction center protein L from Prochlorococcus marinus (strain MIT 9515).